Here is a 482-residue protein sequence, read N- to C-terminus: U2 small nuclear ribonucleoprotein auxiliary factor 35 kDa subunit-related protein 2 (482 aa).

The interval 1 to 59 (MAAPEKMTFPEKPSHKKYRAALKKEKRKKRRQELARLRDSGLSQKEEEEDTFIEEQQLE) is disordered. Over residues 14-31 (SHKKYRAALKKEKRKKRR) the composition is skewed to basic residues. A Glycyl lysine isopeptide (Lys-Gly) (interchain with G-Cter in SUMO2) cross-link involves residue lysine 45. Acidic residues predominate over residues 46-58 (EEEEDTFIEEQQL). Lysine 62 is covalently cross-linked (Glycyl lysine isopeptide (Lys-Gly) (interchain with G-Cter in SUMO2)). The tract at residues 115–135 (QRKEREEEEQKRQEKKEKEEA) is disordered. The segment at 166–194 (EKDRANCPFYSKTGACRFGDRCSRKHNFP) adopts a C3H1-type 1 zinc-finger fold. The 107-residue stretch at 198 to 304 (PTLLIKSMFT…RQLQCEFCPV (107 aa)) folds into the RRM domain. The C3H1-type 2 zinc-finger motif lies at 306-333 (RWKMAICGLFEIQQCPRGKHCNFLHVFR). At serine 349 the chain carries Phosphoserine. A disordered region spans residues 351 to 482 (DRTGSSFGKN…DRTVQSPKSK (132 aa)). Composition is skewed to basic and acidic residues over residues 360–375 (NSERRERMGHHDDYYS) and 383–398 (PSPDHSYKRNGESERK). The residue at position 384 (serine 384) is a Phosphoserine. Residues 399 to 412 (SSRHRGKKSHKRTS) show a composition bias toward basic residues. Positions 413 to 435 (KSRERHNSRSRGRNRDRSRDRSR) are enriched in basic and acidic residues. The segment covering 436–454 (GRGSRSRSRSRSRRSRRSR) has biased composition (basic residues).

In terms of assembly, component of the U11/U12 snRNPs that are part of the U12-type spliceosome. Interacts (via RS domain) with SRSF1 and SRSF2. Interacts with U2AF2/U2AF65. Phosphorylated in the RS domain by SRPK1. As to expression, widely expressed.

It is found in the nucleus. Its function is as follows. Pre-mRNA-binding protein required for splicing of both U2- and U12-type introns. Selectively interacts with the 3'-splice site of U2- and U12-type pre-mRNAs and promotes different steps in U2 and U12 intron splicing. Recruited to U12 pre-mRNAs in an ATP-dependent manner and is required for assembly of the pre-spliceosome, a precursor to other spliceosomal complexes. For U2-type introns, it is selectively and specifically required for the second step of splicing. This chain is U2 small nuclear ribonucleoprotein auxiliary factor 35 kDa subunit-related protein 2 (ZRSR2), found in Homo sapiens (Human).